The primary structure comprises 182 residues: Adenine phosphoribosyltransferase (182 aa).

It belongs to the purine/pyrimidine phosphoribosyltransferase family. In terms of assembly, homodimer.

Its subcellular location is the cytoplasm. It catalyses the reaction AMP + diphosphate = 5-phospho-alpha-D-ribose 1-diphosphate + adenine. It functions in the pathway purine metabolism; AMP biosynthesis via salvage pathway; AMP from adenine: step 1/1. In terms of biological role, catalyzes a salvage reaction resulting in the formation of AMP, that is energically less costly than de novo synthesis. This Ectopseudomonas mendocina (strain ymp) (Pseudomonas mendocina) protein is Adenine phosphoribosyltransferase.